Consider the following 245-residue polypeptide: Eukaryotic translation initiation factor 6 (245 aa).

This sequence belongs to the eIF-6 family. As to quaternary structure, monomer. Associates with the 60S ribosomal subunit.

It localises to the cytoplasm. It is found in the nucleus. The protein resides in the nucleolus. In terms of biological role, binds to the 60S ribosomal subunit and prevents its association with the 40S ribosomal subunit to form the 80S initiation complex in the cytoplasm. May also be involved in ribosome biogenesis. This Drosophila melanogaster (Fruit fly) protein is Eukaryotic translation initiation factor 6.